Here is a 930-residue protein sequence, read N- to C-terminus: Translation initiation factor IF-2 (930 aa).

The segment covering 50–67 has biased composition (low complexity); sequence FKPAAAPKVEAKPAAPKV. Disordered stretches follow at residues 50–195 and 260–346; these read FKPA…PRID and EVVP…HELP. 2 stretches are compositionally biased toward basic and acidic residues: residues 68–90 and 110–125; these read SAEKKTEKSEPAKPAVAKEEAKP and FKAEREARAKEQAERR. Low complexity predominate over residues 129-141; the sequence is KGNNRDQQQNGNR. Basic and acidic residues-rich tracts occupy residues 157–167 and 262–295; these read RDNRRFNDQAK and VPEKKEPAVDTRRKKQARPDKNRDDYDHEEDGPR. Residues 309-318 are compositionally biased toward low complexity; that stretch reads NQKNSNWNNN. Residues 337–346 are compositionally biased toward basic and acidic residues; that stretch reads VTERKFHELP. The tr-type G domain occupies 432 to 599; it reads ERPPVVTIMG…TVLLVAEIQE (168 aa). The segment at 441–448 is G1; the sequence is GHVDHGKT. Residue 441–448 coordinates GTP; it reads GHVDHGKT. A G2 region spans residues 466–470; the sequence is GITQH. The interval 487–490 is G3; that stretch reads DTPG. GTP-binding positions include 487–491 and 541–544; these read DTPGH and NKID. Positions 541-544 are G4; the sequence is NKID. Residues 577 to 579 form a G5 region; it reads SAK.

It belongs to the TRAFAC class translation factor GTPase superfamily. Classic translation factor GTPase family. IF-2 subfamily.

It is found in the cytoplasm. Functionally, one of the essential components for the initiation of protein synthesis. Protects formylmethionyl-tRNA from spontaneous hydrolysis and promotes its binding to the 30S ribosomal subunits. Also involved in the hydrolysis of GTP during the formation of the 70S ribosomal complex. The sequence is that of Translation initiation factor IF-2 from Streptococcus pneumoniae (strain ATCC BAA-255 / R6).